Reading from the N-terminus, the 517-residue chain is MVPSLERGISITSSFNLDRMFDSSPGKEQQQPHLAETTMPESQTQDSLGGSPVETSRPMTSRLISRRQDKQQSETEMMKDRFTKLLLGEDMSGGGKGVSSALALSNAITNLAASIFGEQTKLQPMAPDRRARWKKEIDWLLSVTDHIVEFVPSQQISKEGVCTEIMVTRQRGDLLMNIPALRKLDAMLIDTLDNFRGHNEFWYVSRDSEEGKQARNERTKDKWWLPPVKVPPNGLSESARRMLHFQKDSVSQVQKAAMAINAQVLSEMAIPDSYIESLPKNGRVSLGDSLYKSITEEWFDPEQFLSTLDLSTEHKVLDVKNRIEASIVIWKRKLHLKDNKSSWGSAVSLEKRELFEERAETILVLLKQKFPGLPQSSLDISKIQYNKDVGHAVLESYSRILESLGYTEMSRIDDVLYADSLARKQCTGEETSDGGKIATETDSASAGSSNYSGEEIEKLESQNSSKTTLLDFIGWSDNSSKGQSEKPPKSPRMTPKKLSYLEKLENLNGFRSPKDRH.

Disordered regions lie at residues Asn16–Glu76 and Gly428–His517. Over residues Met39 to Leu63 the composition is skewed to polar residues. In terms of domain architecture, PRONE spans Ser65–Glu429. The span at Arg66–Glu76 shows a compositional bias: basic and acidic residues. The segment covering Glu440–Ser452 has biased composition (polar residues).

Interacts with ARAC11/ROP1 and ARAC10/ROP11. Interacts with PRK6. As to expression, expressed in pollen grains and pollen tubes.

The protein resides in the cell membrane. Its function is as follows. Guanine-nucleotide exchange factor (GEF) that acts as an activator of Rop (Rho of plants) GTPases by promoting the exchange of GDP for GTP. This is Rop guanine nucleotide exchange factor 9 from Arabidopsis thaliana (Mouse-ear cress).